The chain runs to 507 residues: FAD-linked oxidoreductase OXR1 (507 aa).

The signal sequence occupies residues 1-21; the sequence is MTIKFASLILAGLGLGSGALG. Residues N34 and N65 are each glycosylated (N-linked (GlcNAc...) asparagine). Positions 73-245 constitute an FAD-binding PCMH-type domain; sequence YAPPTFKVSV…VSATYKLKPL (173 aa). Residues N263 and N288 are each glycosylated (N-linked (GlcNAc...) asparagine).

The protein belongs to the oxygen-dependent FAD-linked oxidoreductase family. It depends on FAD as a cofactor.

It carries out the reaction dihydropyriculol + A = pyriculol + AH2. It catalyses the reaction dihydropyriculariol + A = pyriculariol + AH2. The protein operates within polyketide biosynthesis. Functionally, FAD-linked oxidoreductase; part of the gene cluster that mediates the biosynthesis of pyriculol and pyriculariol, two heptaketides that induce lesion formation upon application on rice leaves but are dispensable for pathogenicity. The highly reducing polyketide synthase synthesizes the heptaketide backbone of pyriculol and pyriculariol. Pyriculol and pyriculariol contain several hydroxyl moieties and double bonds, so it can be assumed that several reduction steps occur during biosynthesis. These reactions could be executed by PKS19 itself or partly by the tailoring enzymes OXR1, OXR2, RED1, RED2 or RED3, identified within the cluster. The FAD-linked oxidoreductase OXR1 is the only tailoring enzyme for which the function has been determined yet, and is involved in the oxidation of dihydropyriculol and dihydropyriculariol into pyriculol and pyriculariol, respectively. This chain is FAD-linked oxidoreductase OXR1, found in Pyricularia oryzae (strain 70-15 / ATCC MYA-4617 / FGSC 8958) (Rice blast fungus).